Here is an 80-residue protein sequence, read N- to C-terminus: Acyl carrier protein (80 aa).

Residues 1-76 (MTLEEKIIEI…DVIDYLKVRN (76 aa)) enclose the Carrier domain. At S36 the chain carries O-(pantetheine 4'-phosphoryl)serine.

The protein belongs to the acyl carrier protein (ACP) family. 4'-phosphopantetheine is transferred from CoA to a specific serine of apo-ACP by AcpS. This modification is essential for activity because fatty acids are bound in thioester linkage to the sulfhydryl of the prosthetic group.

The protein resides in the cytoplasm. The protein operates within lipid metabolism; fatty acid biosynthesis. Its function is as follows. Carrier of the growing fatty acid chain in fatty acid biosynthesis. The polypeptide is Acyl carrier protein (Syntrophus aciditrophicus (strain SB)).